Reading from the N-terminus, the 110-residue chain is Thioredoxin (110 aa).

The Thioredoxin domain occupies 2–110 (SALLVEIDKD…IDAMIAKHVG (109 aa)). A disulfide bridge links cysteine 33 with cysteine 36.

The protein belongs to the thioredoxin family.

Its function is as follows. Participates in various redox reactions through the reversible oxidation of its active center dithiol to a disulfide and catalyzes dithiol-disulfide exchange reactions. The chain is Thioredoxin (trxA) from Peptoclostridium acidaminophilum (Eubacterium acidaminophilum).